The following is a 99-amino-acid chain: Small ribosomal subunit protein bS6c (99 aa).

It belongs to the bacterial ribosomal protein bS6 family.

The protein localises to the plastid. Its subcellular location is the chloroplast. In terms of biological role, binds together with bS18 to 16S ribosomal RNA. In Cyanidioschyzon merolae (strain NIES-3377 / 10D) (Unicellular red alga), this protein is Small ribosomal subunit protein bS6c.